Consider the following 115-residue polypeptide: MNLFIMLTMSSITVSIVVALNLLTAKTSPDPEKLSPYECGFDPLGSARLPLSIRFFMVGILFLLFDLEIAILLPLTWAIHTLNPLKTITWAIIIFLFLFIGLAYEWLQGGLEWAE.

Helical transmembrane passes span 3–23, 55–75, and 87–107; these read LFIM…LNLL, FFMV…LLPL, and TITW…YEWL.

This sequence belongs to the complex I subunit 3 family.

The protein localises to the mitochondrion membrane. The enzyme catalyses a ubiquinone + NADH + 5 H(+)(in) = a ubiquinol + NAD(+) + 4 H(+)(out). Functionally, core subunit of the mitochondrial membrane respiratory chain NADH dehydrogenase (Complex I) that is believed to belong to the minimal assembly required for catalysis. Complex I functions in the transfer of electrons from NADH to the respiratory chain. The immediate electron acceptor for the enzyme is believed to be ubiquinone. The polypeptide is NADH-ubiquinone oxidoreductase chain 3 (MT-ND3) (Alligator mississippiensis (American alligator)).